Here is a 128-residue protein sequence, read N- to C-terminus: Glycine cleavage system H protein (128 aa).

One can recognise a Lipoyl-binding domain in the interval 24–106 (LVRIGISEFA…HGEGWLLIIR (83 aa)). K65 is subject to N6-lipoyllysine.

Belongs to the GcvH family. The glycine cleavage system is composed of four proteins: P, T, L and H. Requires (R)-lipoate as cofactor.

In terms of biological role, the glycine cleavage system catalyzes the degradation of glycine. The H protein shuttles the methylamine group of glycine from the P protein to the T protein. The polypeptide is Glycine cleavage system H protein (Prochlorococcus marinus (strain NATL2A)).